Consider the following 241-residue polypeptide: Small ribosomal subunit protein uS2 (241 aa).

The protein belongs to the universal ribosomal protein uS2 family.

In Escherichia coli O127:H6 (strain E2348/69 / EPEC), this protein is Small ribosomal subunit protein uS2.